The following is a 402-amino-acid chain: Protein DesVIII (402 aa).

The protein belongs to the cytochrome P450 family. Forms a complex with DesVII.

Its pathway is antibiotic biosynthesis. Functionally, involved in the biosynthesis of the macrolide antibiotics methymycin, neomethymycin, narbomycin, and pikromycin. DesVIII assists the folding of the DesVII polypeptide. However, unlike chaperones, it remains bound to DesVII during catalysis, forming a tight DesVII/DesVIII complex. Although the formation of the DesVII/DesVIII complex is essential for the catalytic activity, DesVIII is unlikely to be involved in catalysis directly. This is Protein DesVIII from Streptomyces venezuelae.